We begin with the raw amino-acid sequence, 175 residues long: Protein her-1 (175 aa).

The signal sequence occupies residues 1-18 (MRYLPIFVFLGSFGYTET). 2 N-linked (GlcNAc...) asparagine glycosylation sites follow: Asn-98 and Asn-163.

The protein localises to the secreted. In terms of biological role, dictates male development. Probably plays a direct role in cell signaling during C.elegans sex determination. Inhibits the function of tra-2a. The polypeptide is Protein her-1 (her-1) (Caenorhabditis elegans).